Here is a 200-residue protein sequence, read N- to C-terminus: BREX protein BrxB (200 aa).

It belongs to the BrxB family.

In terms of biological role, BREX systems (bacteriophage exclusion) provide immunity against bacteriophage. Part of a type 1 BREX system which protects against dsDNA phage. This system allows phage adsorption but prevents phage DNA replication, without degradation of the phage DNA. Methylation of bacterial DNA by PglX guides self/non-self discrimination. When the brxA-brxB-brxC-pglX-pglZ-brxL genes are transformed into a susceptible E.coli strain (BW25113) they confer very high resistance to infection by bacteriophage VR7 and VpaE1, about 100-fold protection against lambda, T5 and T7 and no protection against RNA phage Qbeta, ssDNA phage M13 or dSDNA phage T4 and VR5. Glycosylated phage DNA is not susceptible to BREX. The BREX system does not confer resistance to lysogenic lambda phage, i.e. prophage that are integrated into the chromosomal DNA and then induced to form phage. The polypeptide is BREX protein BrxB (Escherichia coli O9:H4 (strain HS)).